The chain runs to 357 residues: Protein-glutamate methylesterase/protein-glutamine glutaminase (357 aa).

The region spanning 3-120 is the Response regulatory domain; it reads RVIVVDDSAF…LASMDLAALS (118 aa). Position 54 is a 4-aspartylphosphate (Asp-54). The 193-residue stretch at 165-357 folds into the CheB-type methylesterase domain; it reads ERSRRDIIAI…AERVASALYK (193 aa). Catalysis depends on residues Ser-177, His-204, and Asp-300.

The protein belongs to the CheB family. Phosphorylated by CheA. Phosphorylation of the N-terminal regulatory domain activates the methylesterase activity.

It is found in the cytoplasm. It catalyses the reaction [protein]-L-glutamate 5-O-methyl ester + H2O = L-glutamyl-[protein] + methanol + H(+). The catalysed reaction is L-glutaminyl-[protein] + H2O = L-glutamyl-[protein] + NH4(+). Its function is as follows. Involved in chemotaxis. Part of a chemotaxis signal transduction system that modulates chemotaxis in response to various stimuli. Catalyzes the demethylation of specific methylglutamate residues introduced into the chemoreceptors (methyl-accepting chemotaxis proteins or MCP) by CheR. Also mediates the irreversible deamidation of specific glutamine residues to glutamic acid. The protein is Protein-glutamate methylesterase/protein-glutamine glutaminase of Lawsonia intracellularis (strain PHE/MN1-00).